A 166-amino-acid polypeptide reads, in one-letter code: FMN reductase (NADH) RutF (166 aa).

This sequence belongs to the non-flavoprotein flavin reductase family. RutF subfamily.

It catalyses the reaction FMNH2 + NAD(+) = FMN + NADH + 2 H(+). Its function is as follows. Catalyzes the reduction of FMN to FMNH2 which is used to reduce pyrimidine by RutA via the Rut pathway. This Cronobacter turicensis (strain DSM 18703 / CCUG 55852 / LMG 23827 / z3032) protein is FMN reductase (NADH) RutF.